The chain runs to 29 residues: RVCPRILMECKKDSDCLAECVCLEHGYCG.

3 disulfide bridges follow: C3-C20, C10-C22, and C16-C28.

It belongs to the protease inhibitor I7 (squash-type serine protease inhibitor) family.

It is found in the secreted. Its function is as follows. Inhibits trypsin. This Cucurbita maxima (Pumpkin) protein is Trypsin inhibitor 1.